The primary structure comprises 185 residues: Vomeronasal secretory protein 2 (185 aa).

Residues 1–19 (MKSLLLTVTLSSLVATLQT) form the signal peptide. Cys80 and Cys172 are disulfide-bonded.

Belongs to the calycin superfamily. Lipocalin family. Specifically expressed in vomeronasal and posterior glands of the nasal septum, the ducts of which open into the lumen of the vomeronasal organ.

It is found in the secreted. Functionally, transport of lipophilic molecules, possible pheromone-carrier. This Mus musculus (Mouse) protein is Vomeronasal secretory protein 2 (Lcn4).